We begin with the raw amino-acid sequence, 238 residues long: Xyloglucan-specific endo-beta-1,4-glucanase A (238 aa).

The N-terminal stretch at 1–14 (MKLSLLSLATLASA) is a signal peptide.

It belongs to the glycosyl hydrolase 12 (cellulase H) family.

It is found in the secreted. The catalysed reaction is xyloglucan + H2O = xyloglucan oligosaccharides.. In terms of biological role, catalyzes endohydrolysis of 1,4-beta-D-glucosidic linkages in xyloglucan with retention of the beta-configuration of the glycosyl residues. Specific for xyloglucan and does not hydrolyze other cell wall components. The chain is Xyloglucan-specific endo-beta-1,4-glucanase A (xgeA) from Aspergillus aculeatus.